Consider the following 39-residue polypeptide: Photosystem I reaction center subunit IX (39 aa).

Residues 4-24 (FLTTAPVVAAIWFTLTAGILI) traverse the membrane as a helical segment.

The protein belongs to the PsaJ family.

The protein localises to the cellular thylakoid membrane. May help in the organization of the PsaE and PsaF subunits. This Synechococcus sp. (strain CC9311) protein is Photosystem I reaction center subunit IX.